Here is an 884-residue protein sequence, read N- to C-terminus: Alanine--tRNA ligase (884 aa).

Zn(2+)-binding residues include His562, His566, Cys674, and His678.

It belongs to the class-II aminoacyl-tRNA synthetase family. Zn(2+) serves as cofactor.

The protein resides in the cytoplasm. It carries out the reaction tRNA(Ala) + L-alanine + ATP = L-alanyl-tRNA(Ala) + AMP + diphosphate. In terms of biological role, catalyzes the attachment of alanine to tRNA(Ala) in a two-step reaction: alanine is first activated by ATP to form Ala-AMP and then transferred to the acceptor end of tRNA(Ala). Also edits incorrectly charged Ser-tRNA(Ala) and Gly-tRNA(Ala) via its editing domain. This chain is Alanine--tRNA ligase, found in Rhizobium etli (strain ATCC 51251 / DSM 11541 / JCM 21823 / NBRC 15573 / CFN 42).